The following is a 151-amino-acid chain: Transcriptional regulator MraZ (151 aa).

2 SpoVT-AbrB domains span residues 5–52 (ATAV…PLMN) and 81–124 (ATEC…SDVE).

It belongs to the MraZ family. In terms of assembly, forms oligomers.

The protein resides in the cytoplasm. The protein localises to the nucleoid. This is Transcriptional regulator MraZ from Haemophilus influenzae (strain PittGG).